The following is a 336-amino-acid chain: Phospho-N-acetylmuramoyl-pentapeptide-transferase (336 aa).

The next 10 helical transmembrane spans lie at 3-23 (LTLIAAIISFMVSAFTMPYFI), 53-73 (GGTVFLLVATAVSLLVNLFSI), 78-98 (SLALISGILSIVVIYGIIGFL), 118-138 (LALQLAGGLMFYFLHVSPSGI), 143-163 (VFGYQLSLGIFYLFFVLFWVV), 174-194 (GIDGLASISVVISLVTYGVIA), 200-220 (FDVLLLIGTMIGALLGFFCFN), 226-246 (VFMGDVGSLALGAMLAAISIA), 251-271 (WTLLIIGIVYVLETSSVMLQV), and 316-336 (AFLWGVGSLASLLVLAILYVF).

This sequence belongs to the glycosyltransferase 4 family. MraY subfamily. The cofactor is Mg(2+).

It is found in the cell membrane. It catalyses the reaction UDP-N-acetyl-alpha-D-muramoyl-L-alanyl-gamma-D-glutamyl-L-lysyl-D-alanyl-D-alanine + di-trans,octa-cis-undecaprenyl phosphate = Mur2Ac(oyl-L-Ala-gamma-D-Glu-L-Lys-D-Ala-D-Ala)-di-trans,octa-cis-undecaprenyl diphosphate + UMP. The protein operates within cell wall biogenesis; peptidoglycan biosynthesis. Catalyzes the initial step of the lipid cycle reactions in the biosynthesis of the cell wall peptidoglycan: transfers peptidoglycan precursor phospho-MurNAc-pentapeptide from UDP-MurNAc-pentapeptide onto the lipid carrier undecaprenyl phosphate, yielding undecaprenyl-pyrophosphoryl-MurNAc-pentapeptide, known as lipid I. The protein is Phospho-N-acetylmuramoyl-pentapeptide-transferase of Streptococcus pyogenes serotype M5 (strain Manfredo).